A 433-amino-acid polypeptide reads, in one-letter code: Protein CLP1 homolog (433 aa).

Residues Glu-22, Arg-61, and 128–133 (DVGKTT) each bind ATP.

This sequence belongs to the Clp1 family. Clp1 subfamily.

It localises to the nucleus. Required for endonucleolytic cleavage during polyadenylation-dependent pre-mRNA 3'-end formation. This is Protein CLP1 homolog from Brugia malayi (Filarial nematode worm).